The primary structure comprises 545 residues: T-complex protein 1 subunit gamma (545 aa).

N-acetylmethionine is present on M1. Positions 1–24 (MMGHRPVLVLSQNTKRESGRKVQS) are disordered. Residue S11 is modified to Phosphoserine. K15 is covalently cross-linked (Glycyl lysine isopeptide (Lys-Gly) (interchain with G-Cter in SUMO2)). An ADP-binding site is contributed by G42. G42 contributes to the ATP binding site. Residue D93 participates in Mg(2+) binding. Positions 94, 95, 96, 97, 162, and 163 each coordinate ADP. ATP-binding residues include G94, T95, and T96. Position 170 is a phosphoserine (S170). K222 is subject to N6-acetyllysine. 2 positions are modified to phosphoserine: S243 and S244. Y247 bears the Phosphotyrosine mark. Glycyl lysine isopeptide (Lys-Gly) (interchain with G-Cter in SUMO2) cross-links involve residues K248 and K249. The residue at position 252 (S252) is a Phosphoserine. A disulfide bridge connects residues C366 and C372. K381 is covalently cross-linked (Glycyl lysine isopeptide (Lys-Gly) (interchain with G-Cter in SUMO2)). Residue G411 coordinates ADP. G411 contributes to the ATP binding site. A phosphothreonine mark is found at T430 and T459. ADP contacts are provided by G482, E483, E497, and K502. G482 is a binding site for ATP. E497 is a binding site for ATP. Residues 526 to 545 (HKKKGDDQNRQTGAPDAGQE) form a disordered region.

The protein belongs to the TCP-1 chaperonin family. Component of the chaperonin-containing T-complex (TRiC), a hexadecamer composed of two identical back-to-back stacked rings enclosing a protein folding chamber. Each ring is made up of eight different subunits: TCP1/CCT1, CCT2, CCT3, CCT4, CCT5, CCT6A/CCT6, CCT7, CCT8. Interacts with PACRG. Interacts with DNAAF4. Interacts with DLEC1.

The protein resides in the cytoplasm. The enzyme catalyses ATP + H2O = ADP + phosphate + H(+). Its function is as follows. Component of the chaperonin-containing T-complex (TRiC), a molecular chaperone complex that assists the folding of actin, tubulin and other proteins upon ATP hydrolysis. The TRiC complex mediates the folding of WRAP53/TCAB1, thereby regulating telomere maintenance. As part of the TRiC complex may play a role in the assembly of BBSome, a complex involved in ciliogenesis regulating transports vesicles to the cilia. This is T-complex protein 1 subunit gamma (Cct3) from Rattus norvegicus (Rat).